The chain runs to 686 residues: Potassium-transporting ATPase ATP-binding subunit 2 (686 aa).

4 consecutive transmembrane segments (helical) span residues 37-57 (MFVV…PNLF), 64-84 (MILY…FANF), 223-243 (LLVS…PMAI), and 255-275 (VALT…AIGI). The active-site 4-aspartylphosphate intermediate is Asp-306. ATP-binding positions include Asp-343, Glu-347, 376 to 383 (FTAQTRMS), and Lys-395. 2 residues coordinate Mg(2+): Asp-518 and Asp-522. 3 consecutive transmembrane segments (helical) span residues 588-608 (FAII…LNIM), 616-636 (AILS…PLAM), and 656-676 (VYGV…DLVI).

It belongs to the cation transport ATPase (P-type) (TC 3.A.3) family. Type IA subfamily. The system is composed of three essential subunits: KdpA, KdpB and KdpC.

The protein resides in the cell membrane. It carries out the reaction K(+)(out) + ATP + H2O = K(+)(in) + ADP + phosphate + H(+). Functionally, part of the high-affinity ATP-driven potassium transport (or Kdp) system, which catalyzes the hydrolysis of ATP coupled with the electrogenic transport of potassium into the cytoplasm. This subunit is responsible for energy coupling to the transport system and for the release of the potassium ions to the cytoplasm. The polypeptide is Potassium-transporting ATPase ATP-binding subunit 2 (Listeria innocua serovar 6a (strain ATCC BAA-680 / CLIP 11262)).